Here is a 959-residue protein sequence, read N- to C-terminus: Glycine dehydrogenase (decarboxylating) (959 aa).

At K708 the chain carries N6-(pyridoxal phosphate)lysine.

This sequence belongs to the GcvP family. In terms of assembly, the glycine cleavage system is composed of four proteins: P, T, L and H. Pyridoxal 5'-phosphate is required as a cofactor.

It catalyses the reaction N(6)-[(R)-lipoyl]-L-lysyl-[glycine-cleavage complex H protein] + glycine + H(+) = N(6)-[(R)-S(8)-aminomethyldihydrolipoyl]-L-lysyl-[glycine-cleavage complex H protein] + CO2. Its function is as follows. The glycine cleavage system catalyzes the degradation of glycine. The P protein binds the alpha-amino group of glycine through its pyridoxal phosphate cofactor; CO(2) is released and the remaining methylamine moiety is then transferred to the lipoamide cofactor of the H protein. In Yersinia pseudotuberculosis serotype O:1b (strain IP 31758), this protein is Glycine dehydrogenase (decarboxylating).